The chain runs to 304 residues: MREKMTEQETYCGFIAIVGRPNVGKSTLLNKILGQKISITSRKAQTTRHRIVGIHTEGVYQAVYVDTPGLHIEEKRAINRLMNRAASSAIGDVDLIIFVVDGTHWNDDDEMVLNKLRRAKAPVVLAINKVDNIKNKDELLPFITDVSQKLEFKEIIPISAQRGNNIHNLEKIVRTSLRKGVHHFPEDYVTDRSQRFMASEIIREKLMRFTGEELPYSVTVEIEQFKLNDRGIYEINGLILVEREGQKKMVIGAKGQKLKTIGTEARQDMERLFDNKVHLELWVKVKSGWADDERALRSLGYIDE.

In terms of domain architecture, Era-type G spans 11–186 (YCGFIAIVGR…LRKGVHHFPE (176 aa)). The segment at 19 to 26 (GRPNVGKS) is G1. Residue 19–26 (GRPNVGKS) coordinates GTP. A G2 region spans residues 45 to 49 (QTTRH). The G3 stretch occupies residues 66 to 69 (DTPG). Residues 66–70 (DTPGL) and 128–131 (NKVD) each bind GTP. A G4 region spans residues 128–131 (NKVD). The G5 stretch occupies residues 158–160 (ISA). A KH type-2 domain is found at 210 to 287 (TGEELPYSVT…HLELWVKVKS (78 aa)).

The protein belongs to the TRAFAC class TrmE-Era-EngA-EngB-Septin-like GTPase superfamily. Era GTPase family. As to quaternary structure, monomer.

The protein localises to the cytoplasm. Its subcellular location is the cell inner membrane. An essential GTPase that binds both GDP and GTP, with rapid nucleotide exchange. Plays a role in 16S rRNA processing and 30S ribosomal subunit biogenesis and possibly also in cell cycle regulation and energy metabolism. The sequence is that of GTPase Era from Histophilus somni (strain 2336) (Haemophilus somnus).